We begin with the raw amino-acid sequence, 367 residues long: Methylated-thiol--coenzyme M methyltransferase (367 aa).

Zn(2+) is bound by residues His-236, Cys-238, and Cys-313.

The protein belongs to the uroporphyrinogen decarboxylase family. Homodimer. It depends on Zn(2+) as a cofactor.

It catalyses the reaction methanethiol + coenzyme M = methyl-coenzyme M + hydrogen sulfide + H(+). Methyltransferase involved in methanogenesis from methylated-thiols. Catalyzes two successive steps: mediates the transfer of a methyl group from the substrate to the cobalt cofactor of a methylated-thiol-specific corrinoid protein (MtsB), and the subsequent transfer of the methyl group from the corrinoid protein to coenzyme M. In Methanosarcina mazei (strain ATCC BAA-159 / DSM 3647 / Goe1 / Go1 / JCM 11833 / OCM 88) (Methanosarcina frisia), this protein is Methylated-thiol--coenzyme M methyltransferase (mtsA).